Here is a 457-residue protein sequence, read N- to C-terminus: Siroheme synthase (457 aa).

The interval 1 to 204 is precorrin-2 dehydrogenase /sirohydrochlorin ferrochelatase; that stretch reads MDHLPIFCQL…QDQQAVEETT (204 aa). Residues 22–23 and 43–44 contribute to the NAD(+) site; these read DV and LA. A Phosphoserine modification is found at Ser-128. Residues 216-457 are uroporphyrinogen-III C-methyltransferase; sequence GEVVLVGAGP…REKLNWFSNH (242 aa). Pro-225 provides a ligand contact to S-adenosyl-L-methionine. Catalysis depends on Asp-248, which acts as the Proton acceptor. Lys-270 serves as the catalytic Proton donor. S-adenosyl-L-methionine contacts are provided by residues 301–303, Ile-306, 331–332, Met-382, and Gly-411; these read GGD and TA.

In the N-terminal section; belongs to the precorrin-2 dehydrogenase / sirohydrochlorin ferrochelatase family. This sequence in the C-terminal section; belongs to the precorrin methyltransferase family.

It carries out the reaction uroporphyrinogen III + 2 S-adenosyl-L-methionine = precorrin-2 + 2 S-adenosyl-L-homocysteine + H(+). The enzyme catalyses precorrin-2 + NAD(+) = sirohydrochlorin + NADH + 2 H(+). It catalyses the reaction siroheme + 2 H(+) = sirohydrochlorin + Fe(2+). The protein operates within cofactor biosynthesis; adenosylcobalamin biosynthesis; precorrin-2 from uroporphyrinogen III: step 1/1. Its pathway is cofactor biosynthesis; adenosylcobalamin biosynthesis; sirohydrochlorin from precorrin-2: step 1/1. It functions in the pathway porphyrin-containing compound metabolism; siroheme biosynthesis; precorrin-2 from uroporphyrinogen III: step 1/1. It participates in porphyrin-containing compound metabolism; siroheme biosynthesis; siroheme from sirohydrochlorin: step 1/1. The protein operates within porphyrin-containing compound metabolism; siroheme biosynthesis; sirohydrochlorin from precorrin-2: step 1/1. Multifunctional enzyme that catalyzes the SAM-dependent methylations of uroporphyrinogen III at position C-2 and C-7 to form precorrin-2 via precorrin-1. Then it catalyzes the NAD-dependent ring dehydrogenation of precorrin-2 to yield sirohydrochlorin. Finally, it catalyzes the ferrochelation of sirohydrochlorin to yield siroheme. In Enterobacter sp. (strain 638), this protein is Siroheme synthase.